The sequence spans 451 residues: tRNA-2-methylthio-N(6)-dimethylallyladenosine synthase (451 aa).

The 118-residue stretch at 2 to 119 folds into the MTTase N-terminal domain; that stretch reads QNLYIKTYGC…LPDLLDACLA (118 aa). [4Fe-4S] cluster contacts are provided by Cys11, Cys48, Cys82, Cys157, Cys161, and Cys164. The region spanning 143 to 377 is the Radical SAM core domain; the sequence is GRDGATAFVT…RINGLAQGYA (235 aa). The TRAM domain maps to 378–441; it reads QALVGTQQAV…PNSLRGRAAL (64 aa).

This sequence belongs to the methylthiotransferase family. MiaB subfamily. As to quaternary structure, monomer. [4Fe-4S] cluster is required as a cofactor.

It localises to the cytoplasm. The enzyme catalyses N(6)-dimethylallyladenosine(37) in tRNA + (sulfur carrier)-SH + AH2 + 2 S-adenosyl-L-methionine = 2-methylsulfanyl-N(6)-dimethylallyladenosine(37) in tRNA + (sulfur carrier)-H + 5'-deoxyadenosine + L-methionine + A + S-adenosyl-L-homocysteine + 2 H(+). Its function is as follows. Catalyzes the methylthiolation of N6-(dimethylallyl)adenosine (i(6)A), leading to the formation of 2-methylthio-N6-(dimethylallyl)adenosine (ms(2)i(6)A) at position 37 in tRNAs that read codons beginning with uridine. The protein is tRNA-2-methylthio-N(6)-dimethylallyladenosine synthase of Acidithiobacillus ferrooxidans (strain ATCC 23270 / DSM 14882 / CIP 104768 / NCIMB 8455) (Ferrobacillus ferrooxidans (strain ATCC 23270)).